Consider the following 164-residue polypeptide: CB1 cannabinoid receptor-interacting protein 1 (164 aa).

This sequence belongs to the CNRIP family. As to quaternary structure, interacts with the cannabinoid receptor CNR1 (via C-terminus). Does not interact with cannabinoid receptor CNR2.

Its function is as follows. Suppresses cannabinoid receptor CNR1-mediated tonic inhibition of voltage-gated calcium channels. Functionally, does not suppress cannabinoid receptor CNR1-mediated tonic inhibition of voltage-gated calcium channels. In Homo sapiens (Human), this protein is CB1 cannabinoid receptor-interacting protein 1 (CNRIP1).